A 1862-amino-acid chain; its full sequence is Ankyrin-1 (1862 aa).

Residues 1-827 (MGFCKADAAT…DELVGSKAER (827 aa)) form an 89 kDa domain region. ANK repeat units follow at residues 40–69 (NGLN…ILET), 73–102 (KGNT…NVNA), 106–135 (KGFT…NQNV), 139–168 (DGFT…KGKV), 170–197 (LPAL…NPDV), 201–230 (TGFT…SVNF), 234–263 (NGIT…QIET), 267–296 (DELT…PIQA), 300–329 (NGLS…EIDD), 333–362 (DHLT…KPNS), 366–395 (NGFT…SIDA), 399–428 (SGLT…SPNV), 432–461 (KVET…KANA), 465–494 (DDQT…SPNL), 498–527 (AGHT…SQAC), 531–560 (KGFT…HPNA), 564–593 (NGLT…SPHS), 597–626 (NGYT…SANA), 630–659 (QGVT…NGNL), 663–692 (SGLT…TVDA), 696–725 (MGYT…DVNA), 729–758 (LGYS…SPNE), and 762–791 (NGTT…ETSV). Lys-55 is modified (phosphoserine). Asn-101 is modified ((3S)-3-hydroxyasparagine; by HIF1AN; partial). Asn-229 carries the (3S)-3-hydroxyasparagine; by HIF1AN modification. The residue at position 425 (Ser-425) is a Phosphoserine. (3S)-3-hydroxyasparagine; by HIF1AN occurs at positions 427 and 460. (3S)-3-hydroxyasparagine; by HIF1AN is present on residues Asn-625 and Asn-658. (3S)-3-hydroxyaspartate; by HIF1AN is present on Asp-691. Asn-724 bears the (3S)-3-hydroxyasparagine; by HIF1AN mark. Ser-755 carries the post-translational modification Phosphoserine. Asn-757 is subject to (3S)-3-hydroxyasparagine; by HIF1AN. Ser-777, Ser-813, Ser-830, and Ser-852 each carry phosphoserine. The tract at residues 812–834 (VSEDEGDELVGSKAERRDSRDVG) is disordered. Positions 824-834 (KAERRDSRDVG) are enriched in basic and acidic residues. Thr-862 carries the phosphothreonine modification. A disordered region spans residues 872–900 (DQEQASKEYDEDSLIPSSPATETSDNISP). Polar residues predominate over residues 886 to 900 (IPSSPATETSDNISP). 2 ZU5 domains span residues 909-1064 (FLVS…IMSR) and 1066-1212 (CQDY…LSDC). The residue at position 957 (Thr-957) is a Phosphothreonine. Tyr-1069 is modified (phosphotyrosine). At Ser-1078 the chain carries Phosphoserine. The UPA domain stretch occupies residues 1197-1331 (ANFTTNVSAR…PVKVRDSSRE (135 aa)). 2 positions are modified to phosphothreonine: Thr-1374 and Thr-1376. Ser-1386 and Ser-1388 each carry phosphoserine. A 55 kDa regulatory domain region spans residues 1387 to 1862 (ESRLGFTSDT…KRASLKRGKQ (476 aa)). Position 1396 is a phosphothreonine (Thr-1396). One can recognise a Death domain in the interval 1399-1483 (VEMRMAVIRE…EIVNMLEGSG (85 aa)). Phosphoserine is present on residues Ser-1424, Ser-1473, and Ser-1482. Residues 1481–1506 (GSGRQSRNLKPERRHGDREYSLSPSQ) form a disordered region. A compositionally biased stretch (basic and acidic residues) spans 1489–1500 (LKPERRHGDREY). Ser-1519, Ser-1529, and Ser-1612 each carry phosphoserine. Disordered stretches follow at residues 1598–1720 (EGAH…GPHS) and 1744–1767 (VSTR…KEPS). Over residues 1637 to 1647 (EGQRSEKKRQE) the composition is skewed to basic and acidic residues. Over residues 1648 to 1666 (VSGTEQDTETEVSLVSGQQ) the composition is skewed to polar residues. 3 positions are modified to phosphoserine: Ser-1660, Ser-1675, and Ser-1685. A compositionally biased stretch (basic and acidic residues) spans 1681–1694 (VLDRSQARTLDWDK). Positions 1695–1720 (QGSTAVHPQEATQSSWQEEVTQGPHS) are enriched in polar residues.

Component of the ankyrin-1 complex in the erythrocyte, composed of ANK1, RHCE, RHAG, SLC4A1, EPB42, GYPA, GYPB and AQP1. Interacts with a number of integral membrane proteins and cytoskeletal proteins. Interacts (via N-terminus) with SPTB/spectrin (beta chain). Also interacts with TTN/titin. Isoform Mu17 interacts with OBSCN isoform 3/obscurin. Interacts with HIF1AN. Interacts (via ANK 1-5 repeats) with RHCE; this interaction mediates the primary membrane attachment site for ANK1. Interacts (via ANK 1-2 repeats) with AQP1 (via the N-terminal). Interacts (via ANK 1-13 repeats) with EPB42. Interacts directly with SLC4A1 (via the cytoplasmic domain); this interaction is mediated by the SLC4A1 Band 3-II and Band 3-III dimers. Regulated by phosphorylation. Post-translationally, acylated by palmitic acid group(s). In terms of processing, hydroxylated by HIF1AN at several asparagine and 1 aspartate residue within ANK repeat region; hydroxylation seems to increase the conformational stability of this region and may also modulate protein-protein interactions mediated by the ANK repeat region.

Its subcellular location is the cytoplasm. The protein resides in the cytoskeleton. The protein localises to the membrane. It is found in the sarcoplasmic reticulum. Component of the ankyrin-1 complex, a multiprotein complex involved in the stability and shape of the erythrocyte membrane. Attaches integral membrane proteins to cytoskeletal elements; binds to the erythrocyte membrane protein band 4.2, to Na-K ATPase, to the lymphocyte membrane protein GP85, and to the cytoskeletal proteins fodrin, tubulin, vimentin and desmin. Erythrocyte ankyrins also link spectrin (beta chain) to the cytoplasmic domain of the erythrocytes anion exchange protein; they retain most or all of these binding functions. This chain is Ankyrin-1, found in Mus musculus (Mouse).